Consider the following 138-residue polypeptide: High mobility group B protein 4 (138 aa).

Disordered stretches follow at residues 1 to 41 (MKGG…PPSA) and 105 to 138 (LKLASGTNREEDDSDKSKSEVDEAVSEEEAEDDD). Basic residues predominate over residues 18-29 (KTRGRKAGKKTK). A DNA-binding region (HMG box) is located at residues 35-104 (PKRPPSAFFV…EYIKNVQQYN (70 aa)). S123 and S130 each carry phosphoserine. Residues 126–138 (DEAVSEEEAEDDD) show a composition bias toward acidic residues.

The protein belongs to the HMGB family. As to expression, mostly expressed roots and flowers, and, to a lower extent, in stems and leaves.

It is found in the nucleus. Its subcellular location is the cytoplasm. The protein resides in the cytosol. Functionally, binds preferentially double-stranded DNA. In Arabidopsis thaliana (Mouse-ear cress), this protein is High mobility group B protein 4 (HMGB4).